We begin with the raw amino-acid sequence, 640 residues long: Lysophospholipase (640 aa).

The N-terminal stretch at 1–25 is a signal peptide; it reads MWFLNSVNLLFLVCSVALHLDAVNA. In terms of domain architecture, PLA2c spans 38–589; it reads DCDENINLVR…EKYCWNGTVD (552 aa). Asn84, Asn126, Asn163, Asn173, Asn218, Asn280, Asn310, Asn317, Asn348, Asn391, Asn492, Asn516, Asn544, Asn568, and Asn585 each carry an N-linked (GlcNAc...) asparagine glycan. The span at 594-610 shows a compositional bias: low complexity; the sequence is ISSTTSSSASSTSTSDS. The interval 594–616 is disordered; it reads ISSTTSSSASSTSTSDSGNKENS.

Belongs to the lysophospholipase family. Highly glycosylated.

The protein resides in the secreted. It carries out the reaction a 1-acyl-sn-glycero-3-phosphocholine + H2O = sn-glycerol 3-phosphocholine + a fatty acid + H(+). Functionally, catalyzes the release of fatty acids from lysophospholipids. At acidic pH the enzyme hydrolyzes all phospholipid substrates without metal ion. On the other hand, at alkaline pH the enzyme shows substrate specificity for phosphatidylcholine and lysophosphatidylcholine and requires Ca(2+), Fe(3+), or Al(3+) for the activity. This is Lysophospholipase (PLB) from Kluyveromyces lactis (strain ATCC 8585 / CBS 2359 / DSM 70799 / NBRC 1267 / NRRL Y-1140 / WM37) (Yeast).